Reading from the N-terminus, the 284-residue chain is CUE domain-containing protein 2 (284 aa).

The 44-residue stretch at 141–184 (EELPGVDVLLEVFPTCSMEQAQWVLAKARGDLEEAVHMLVEGKE) folds into the CUE domain. Residues 183 to 204 (KEEGPPGWDGPSQDLPRRLRGP) form a disordered region.

This sequence belongs to the CUEDC2 family. Interacts with PGR and ESR1.

It is found in the cytoplasm. Its subcellular location is the nucleus. Functionally, controls PGR and ESR1 protein levels through their targeting for ubiquitination and subsequent proteasomal degradation. The protein is CUE domain-containing protein 2 (Cuedc2) of Mus musculus (Mouse).